The following is a 427-amino-acid chain: Steroid C26-monooxygenase (427 aa).

Cys-360 contributes to the heme binding site.

This sequence belongs to the cytochrome P450 family. Requires heme as cofactor.

The enzyme catalyses cholest-4-en-3-one + 6 reduced [2Fe-2S]-[ferredoxin] + 3 O2 + 5 H(+) = (25S)-3-oxocholest-4-en-26-oate + 6 oxidized [2Fe-2S]-[ferredoxin] + 4 H2O. It participates in steroid metabolism; cholesterol degradation. Its function is as follows. Involved in the utilization of cholesterol as the sole carbon and energy source by degrading the side chain. Primarily catalyzes the sequential oxidation of the terminal methyl of cholest-4-en-3-one into (25S)-26-hydroxycholest-4-en-3-one (alcohol), (25S)-26-oxocholest-4-en-3-one (aldehyde), to finally yield the carboxylic acid (25S)-3-oxocholest-4-en-26-oate. Also able to sequentially oxidize cholesterol itself, not only cholest-4-en-3-one. This is Steroid C26-monooxygenase from Mycolicibacterium smegmatis (strain ATCC 700084 / mc(2)155) (Mycobacterium smegmatis).